The chain runs to 61 residues: Small ribosomal subunit protein uS14 (61 aa).

Positions 24, 27, 40, and 43 each coordinate Zn(2+).

Belongs to the universal ribosomal protein uS14 family. Zinc-binding uS14 subfamily. Part of the 30S ribosomal subunit. Contacts proteins S3 and S10. Zn(2+) serves as cofactor.

Functionally, binds 16S rRNA, required for the assembly of 30S particles and may also be responsible for determining the conformation of the 16S rRNA at the A site. This chain is Small ribosomal subunit protein uS14, found in Limosilactobacillus fermentum (strain NBRC 3956 / LMG 18251) (Lactobacillus fermentum).